A 3916-amino-acid chain; its full sequence is Fusarin C synthetase (3916 aa).

Residues 9 to 440 (KEPIAIIGTS…GTNVHAIIEQ (432 aa)) enclose the Ketosynthase family 3 (KS3) domain. Catalysis depends on for beta-ketoacyl synthase activity residues cysteine 182, histidine 319, and histidine 360. The interval 548–866 (VFTGQGAQWP…QGTVARNIHD (319 aa)) is malonyl-CoA:ACP transacylase (MAT) domain. Positions 935–1068 (HPLLGARSVE…GQLRVEFGCS (134 aa)) are N-terminal hotdog fold. The interval 935–1228 (HPLLGARSVE…GLTCTSLLRP (294 aa)) is dehydratase (DH) domain. The 297-residue stretch at 935–1231 (HPLLGARSVE…CTSLLRPGPS (297 aa)) folds into the PKS/mFAS DH domain. Histidine 967 (proton acceptor; for dehydratase activity) is an active-site residue. The tract at residues 1084–1231 (LTSVNMERFY…CTSLLRPGPS (148 aa)) is C-terminal hotdog fold. The active-site Proton donor; for dehydratase activity is the aspartate 1141. The segment at 1347-1575 (IQAVGENLPS…VNDFVDAEKY (229 aa)) is C-methyltransferase (CMeT) domain. Positions 2092-2266 (TYLLIGCTGG…AASVMHIGMV (175 aa)) are ketoreductase (KR) domain 1. In terms of domain architecture, Carrier 1 spans 2372-2449 (EILAVVEEEF…ELCSTVVSHL (78 aa)). O-(pantetheine 4'-phosphoryl)serine is present on serine 2409. The disordered stretch occupies residues 2487–2510 (NEPFTIRNSPNSTQVTSEAGVDED). The segment covering 2492 to 2503 (IRNSPNSTQVTS) has biased composition (polar residues). Residues 2522–2806 (PLSFAQERLW…VNLLPLRLKI (285 aa)) are condensation. Residues 2975–3385 (EFVVKQPDDT…RIAGDSQIKL (411 aa)) are adenylation. A Carrier 2 domain is found at 3493-3570 (KPLTETQERL…EMAAKIDGST (78 aa)). O-(pantetheine 4'-phosphoryl)serine is present on serine 3530. The segment at 3612-3833 (LTGATGFLGV…DFVPVDVVAA (222 aa)) is thiolester reductase (R) domain.

In the C-terminal section; belongs to the NRP synthetase family.

It functions in the pathway mycotoxin biosynthesis. Fusarin C synthetase; part of the gene cluster that mediates the biosynthesis of the mycotoxin fusarin C. Within the cluster, FUS1, FUS2, FUS8 and FUS9 are sufficient for fusarin production. The roles of the other FUS members are yet undetermined. The fusarin C synthetase FUS1 is responsible for the condensation of one acetyl-coenzyme A (CoA) unit with six malonyl-CoA units and the amide linkage of the arising heptaketide and homoserine, subsequently releasing the first intermediate, prefusarin, as an alcohol with an open ring structure. The cytochrome P450 monooxygenase FUS8 participates in multiple oxidation processes at carbon C-20 and is able to use the FUS1 product as substrate, resulting in formation of 20-hydroxy-prefusarin. This reaction seems to be essential before the 2-pyrrolidone ring closure can be catalyzed by FUS2, generating 20-hydroxy-fusarin. FUS8 is able to further oxidizes carbon C-20 after ring closure, resulting in the formation of carboxy-fusarin C. As the last step, FUS9 methylates the hydroxyl group at C-21 to generate fusarin C. Fusarin C can then rearrange to epi-fusarin C, the (z)-isomers, and fusarin A and fusarin D. This Gibberella fujikuroi (strain CBS 195.34 / IMI 58289 / NRRL A-6831) (Bakanae and foot rot disease fungus) protein is Fusarin C synthetase.